A 218-amino-acid polypeptide reads, in one-letter code: Small ribosomal subunit protein uS3c (218 aa).

A KH type-2 domain is found at 47–118; it reads VRRHMKNYSN…KLNISIAKVA (72 aa).

This sequence belongs to the universal ribosomal protein uS3 family. As to quaternary structure, part of the 30S ribosomal subunit.

It localises to the plastid. The protein resides in the chloroplast. This Ginkgo biloba (Ginkgo) protein is Small ribosomal subunit protein uS3c (rps3).